The chain runs to 162 residues: Protein A49 (162 aa).

It belongs to the poxviridae A49 protein family.

In Variola virus (isolate Human/India/Ind3/1967) (VARV), this protein is Protein A49.